A 319-amino-acid polypeptide reads, in one-letter code: MRKIAVLTSGGDAPGMNAAIRAVVRTGLDKGITVLGIERGFDGLLNGEIFEMTRRSVADIIQRGGTILRTARSEEFKTEEGQKKATDILRVFGVEGLVVIGGDGSFQGAKSLSELGVKTIGIPGTIDNDLAYTDYTIGFDTAVNTVLDAINKLRDTSTSHGRASVVEVMGRNCGDIALYAGLAGGAESIIVPELRFDIDKLCKTILEGKKNGKMHNLIIVAEGAGKANDIAKTIEKVTGVGTRATVLGHIQRGGSPTANDRILASRMGNRAVELLLEEKSSRVVGINDNRIVDMDIHEALSIEGKFDEKLYEIAKALSY.

An ATP-binding site is contributed by Gly-11. Arg-21–Arg-25 lines the ADP pocket. Residues Arg-72–Ser-73 and Gly-102–Ser-105 contribute to the ATP site. Residue Asp-103 participates in Mg(2+) binding. Thr-125 to Asp-127 serves as a coordination point for substrate. The active-site Proton acceptor is the Asp-127. Arg-154 lines the ADP pocket. Residues Arg-162 and Met-169–Arg-171 contribute to the substrate site. Residues Gly-185–Glu-187 and Lys-213–His-215 contribute to the ADP site. Residues Glu-222, Arg-243, and His-249–Arg-252 contribute to the substrate site.

It belongs to the phosphofructokinase type A (PFKA) family. ATP-dependent PFK group I subfamily. Prokaryotic clade 'B1' sub-subfamily. Homotetramer. The cofactor is Mg(2+).

It is found in the cytoplasm. The catalysed reaction is beta-D-fructose 6-phosphate + ATP = beta-D-fructose 1,6-bisphosphate + ADP + H(+). Its pathway is carbohydrate degradation; glycolysis; D-glyceraldehyde 3-phosphate and glycerone phosphate from D-glucose: step 3/4. With respect to regulation, allosterically activated by ADP and other diphosphonucleosides, and allosterically inhibited by phosphoenolpyruvate. Catalyzes the phosphorylation of D-fructose 6-phosphate to fructose 1,6-bisphosphate by ATP, the first committing step of glycolysis. In Clostridium tetani (strain Massachusetts / E88), this protein is ATP-dependent 6-phosphofructokinase.